Reading from the N-terminus, the 337-residue chain is tRNA(Ile)-lysidine synthase (337 aa).

Residue serine 40 to serine 45 participates in ATP binding.

This sequence belongs to the tRNA(Ile)-lysidine synthase family.

It is found in the cytoplasm. The catalysed reaction is cytidine(34) in tRNA(Ile2) + L-lysine + ATP = lysidine(34) in tRNA(Ile2) + AMP + diphosphate + H(+). Ligates lysine onto the cytidine present at position 34 of the AUA codon-specific tRNA(Ile) that contains the anticodon CAU, in an ATP-dependent manner. Cytidine is converted to lysidine, thus changing the amino acid specificity of the tRNA from methionine to isoleucine. This chain is tRNA(Ile)-lysidine synthase, found in Parasynechococcus marenigrum (strain WH8102).